Consider the following 499-residue polypeptide: Phenylalanine--tRNA ligase alpha subunit (499 aa).

L-phenylalanine contacts are provided by residues Thr-342, 381-383 (QID), and Phe-422. Glu-424 contacts Mg(2+). An L-phenylalanine-binding site is contributed by Phe-447.

Belongs to the class-II aminoacyl-tRNA synthetase family. Phe-tRNA synthetase alpha subunit type 2 subfamily. As to quaternary structure, tetramer of two alpha and two beta subunits. The cofactor is Mg(2+).

It is found in the cytoplasm. The enzyme catalyses tRNA(Phe) + L-phenylalanine + ATP = L-phenylalanyl-tRNA(Phe) + AMP + diphosphate + H(+). The chain is Phenylalanine--tRNA ligase alpha subunit from Pyrococcus horikoshii (strain ATCC 700860 / DSM 12428 / JCM 9974 / NBRC 100139 / OT-3).